We begin with the raw amino-acid sequence, 380 residues long: MSALEKSMHLGRLPSRPPLPGSGGSQSGAKMRMGPGRKRDFSPVPWSQYFESMEDVEVENETGKDTFRVYKSGSEGPVLLLLHGGGHSALSWAVFTAAIISRVQCRIVALDLRGHGETKVRNSEDLSAETMAKDVGNVVEAMYGDLPPPIMLIGHSMGGAIAVHTASSNLVPSLLGLCMIDVVEGTAMDALNSMQNFLRGRPKTFKSLENAIEWSVKSGQIRNLESARVSMVGQVKQCEGITSPEGSKSIVEGIIEEEEEDEEGSESVNKRKKEDDMETKKDHPYTWRIELAKTEKYWDGWFRGLSNLFLSCPIPKLLLLAGVDRLDKDLTIGQMQGKFQMQVLPQCGHAVHEDAPDKVAEAVATFLIRHRFAEPIGGFQ.

Residues 1 to 38 are disordered; sequence MSALEKSMHLGRLPSRPPLPGSGGSQSGAKMRMGPGRK. Phosphoserine is present on S15. The residue at position 16 (R16) is an Asymmetric dimethylarginine; alternate. R16 carries the omega-N-methylarginine; alternate modification. A Phosphoserine modification is found at S42. Active-site residues include S156 and D181. Positions 255 to 265 are enriched in acidic residues; sequence IEEEEEDEEGS. The segment at 255–280 is disordered; the sequence is IEEEEEDEEGSESVNKRKKEDDMETK. Positions 268–280 are enriched in basic and acidic residues; that stretch reads VNKRKKEDDMETK. H349 is an active-site residue.

The protein belongs to the AB hydrolase superfamily. In terms of assembly, binds PPP2CA and PPP2CB. In terms of processing, phosphorylated by SIK1 following increases in intracellular sodium, leading to dissociation from the protein phosphatase 2A (PP2A) complex and subsequent dephosphorylation of sodium/potassium-transporting ATPase ATP1A1.

It carries out the reaction [phosphatase 2A protein]-C-terminal L-leucine methyl ester + H2O = [phosphatase 2A protein]-C-terminal L-leucine + methanol + H(+). Demethylates proteins that have been reversibly carboxymethylated. Demethylates PPP2CB (in vitro) and PPP2CA. Binding to PPP2CA displaces the manganese ion and inactivates the enzyme. This is Protein phosphatase methylesterase 1 (PPME1) from Bos taurus (Bovine).